Here is a 476-residue protein sequence, read N- to C-terminus: RNA-binding protein 45 (476 aa).

Residues 1–20 form a disordered region; it reads MDEAGSSASGGGFRPGVDSL. RRM domains are found at residues 26–106 and 121–195; these read SRIF…IAQS and TRIF…PKNK. A Glycyl lysine isopeptide (Lys-Gly) (interchain with G-Cter in SUMO2) cross-link involves residue Lys34. Ser199 and Ser464 each carry phosphoserine. In terms of domain architecture, RRM 3 spans 392–464; it reads ERLFIVFNPH…VRLKVMLADS (73 aa).

The protein resides in the cytoplasm. The protein localises to the nucleus. Its function is as follows. RNA-binding protein with binding specificity for poly(C). May play an important role in neural development. The protein is RNA-binding protein 45 (RBM45) of Homo sapiens (Human).